Reading from the N-terminus, the 255-residue chain is 2,3-dehydroadipyl-CoA hydratase (255 aa).

The protein belongs to the enoyl-CoA hydratase/isomerase family.

It carries out the reaction a (3S)-3-hydroxyacyl-CoA = a (2E)-enoyl-CoA + H2O. The catalysed reaction is a 4-saturated-(3S)-3-hydroxyacyl-CoA = a (3E)-enoyl-CoA + H2O. It functions in the pathway aromatic compound metabolism; phenylacetate degradation. Its function is as follows. Catalyzes the reversible conversion of enzymatically produced 2,3-dehydroadipyl-CoA into 3-hydroxyadipyl-CoA. This is 2,3-dehydroadipyl-CoA hydratase (paaF) from Escherichia coli (strain K12).